Consider the following 456-residue polypeptide: N(6)-adenosine-methyltransferase non-catalytic subunit METTL14 (456 aa).

Residues 39-51 (DEQREIAETRETS) are compositionally biased toward basic and acidic residues. The interval 39 to 74 (DEQREIAETRETSRASYDTSATVSKRKMPEEGEADE) is disordered. Positions 52–61 (RASYDTSATV) are enriched in polar residues. Interaction with METTL3 regions lie at residues 135-136 (RD) and 237-238 (SG). Positions 245–254 (RMCLRKWGFR) are positively charged region required for RNA-binding. Interaction with METTL3 regions lie at residues 255–258 (RSED) and 278–287 (KAIFQRTKEH). Positions 297–298 (HR) are positively charged region required for RNA-binding. An interaction with METTL3 region spans residues 308–312 (NVDID). The interval 395 to 456 (LRPKTPPPKS…GPHRGVFAPR (62 aa)) is disordered. A compositionally biased stretch (gly residues) spans 410–421 (ASRGGGRGGPSA). Residues 423-441 (RGERGRERNRGSFRGDRGN) show a composition bias toward basic and acidic residues.

Belongs to the MT-A70-like family. In terms of assembly, heterodimer; heterodimerizes with mettl3 to form an antiparallel heterodimer that constitutes an active methyltransferase. Component of the WMM complex, a N6-methyltransferase complex composed of a catalytic subcomplex, named MAC, and of an associated subcomplex, named MACOM. The MAC subcomplex is composed of mettl3 and mettl14.

It is found in the nucleus. Its function is as follows. The METTL3-METTL14 heterodimer forms a N6-methyltransferase complex that methylates adenosine residues at the N(6) position of some mRNAs and regulates the circadian clock, differentiation of embryonic stem cells and cortical neurogenesis. In the heterodimer formed with mettl3, mettl14 constitutes the RNA-binding scaffold that recognizes the substrate rather than the catalytic core. N6-methyladenosine (m6A), which takes place at the 5'-[AG]GAC-3' consensus sites of some mRNAs, plays a role in mRNA stability and processing. This chain is N(6)-adenosine-methyltransferase non-catalytic subunit METTL14 (mettl14), found in Xenopus tropicalis (Western clawed frog).